Reading from the N-terminus, the 500-residue chain is uncharacterized protein (500 aa).

The segment covering 1-13 (MEPSQRSGSFSSI) has biased composition (low complexity). The disordered stretch occupies residues 1-23 (MEPSQRSGSFSSISRRRSRVDSR). S9 is subject to Phosphoserine. A run of 12 helical transmembrane segments spans residues 87-107 (VSIAFILINSLMSDMSLAVAL), 126-146 (LVIGIPTLISLIFLYPMLCFA), 156-176 (LYFRPMVVSSFAHIFGHLLYC), 183-203 (WIYLILIGRMLNGIGFTTFLY), 225-245 (MNILAQTLGFMAGPFLGGILA), 261-281 (VASWVMLFMWFFYMLTIIFFF), 312-332 (FLLFFLAEVAFIAYFTVNGYQ), 351-371 (GNFIALSALIVAPFILASSFL), 380-400 (IMLGGLFLGILAVAIHLVLDA), 408-428 (VYFFLYSLMIYGYSIGSAPLI), 445-465 (IVVQVGVSLSNTFGSICGGAI), and 471-491 (VGFISLCLGLAAVVYMQLIFM).

This sequence belongs to the major facilitator superfamily.

The protein resides in the golgi apparatus. It localises to the membrane. This is an uncharacterized protein from Schizosaccharomyces pombe (strain 972 / ATCC 24843) (Fission yeast).